An 80-amino-acid chain; its full sequence is Omega-conotoxin-like 2/7 (80 aa).

The N-terminal stretch at methionine 1–alanine 22 is a signal peptide. The propeptide occupies aspartate 23–arginine 51. 3 disulfides stabilise this stretch: cysteine 53–cysteine 71, cysteine 60–cysteine 75, and cysteine 70–cysteine 79.

Belongs to the conotoxin O1 superfamily. In terms of tissue distribution, expressed by the venom duct.

It is found in the secreted. Its function is as follows. Omega-conotoxins act at presynaptic membranes, they bind and block voltage-gated calcium channels (Cav). In Conus imperialis (Imperial cone), this protein is Omega-conotoxin-like 2/7.